Reading from the N-terminus, the 402-residue chain is Heat stress transcription factor A-6a (402 aa).

A disordered region spans residues 1-28 (MLKPQTPRARRAAHPNSHMASSSSSSSL). The stretch at 212-258 (EVVSLKRDRAALRAEVIMLKQQYNACKSQLIAMEEMVRNIERRQQQT) forms a coiled coil. The tract at residues 216–266 (LKRDRAALRAEVIMLKQQYNACKSQLIAMEEMVRNIERRQQQTIGFFAKVL) is hydrophobic repeat HR-A/B. Positions 290 to 293 (KRQR) match the Nuclear localization signal motif. An AHA motif is present at residues 349-358 (DDVWEELDAL).

This sequence belongs to the HSF family. Class A subfamily. In terms of assembly, homotrimer. In terms of processing, exhibits temperature-dependent phosphorylation.

Its subcellular location is the nucleus. Its function is as follows. Transcriptional regulator that specifically binds DNA of heat shock promoter elements (HSE). This chain is Heat stress transcription factor A-6a (HSFA6B), found in Oryza sativa subsp. japonica (Rice).